A 513-amino-acid polypeptide reads, in one-letter code: ATP synthase subunit alpha 2 (513 aa).

Residue 169–176 (GDRQVGKT) participates in ATP binding.

This sequence belongs to the ATPase alpha/beta chains family. F-type ATPases have 2 components, CF(1) - the catalytic core - and CF(0) - the membrane proton channel. CF(1) has five subunits: alpha(3), beta(3), gamma(1), delta(1), epsilon(1). CF(0) has three main subunits: a(1), b(2) and c(9-12). The alpha and beta chains form an alternating ring which encloses part of the gamma chain. CF(1) is attached to CF(0) by a central stalk formed by the gamma and epsilon chains, while a peripheral stalk is formed by the delta and b chains.

The protein resides in the cell inner membrane. It catalyses the reaction ATP + H2O + 4 H(+)(in) = ADP + phosphate + 5 H(+)(out). In terms of biological role, produces ATP from ADP in the presence of a proton gradient across the membrane. The alpha chain is a regulatory subunit. The sequence is that of ATP synthase subunit alpha 2 from Psychromonas ingrahamii (strain DSM 17664 / CCUG 51855 / 37).